The primary structure comprises 88 residues: Small ribosomal subunit protein uS15 (88 aa).

The segment covering 1 to 20 (MLATEKKQELIDQYKRHEGD) has biased composition (basic and acidic residues). The tract at residues 1 to 21 (MLATEKKQELIDQYKRHEGDT) is disordered.

It belongs to the universal ribosomal protein uS15 family. In terms of assembly, part of the 30S ribosomal subunit. Forms a bridge to the 50S subunit in the 70S ribosome, contacting the 23S rRNA.

In terms of biological role, one of the primary rRNA binding proteins, it binds directly to 16S rRNA where it helps nucleate assembly of the platform of the 30S subunit by binding and bridging several RNA helices of the 16S rRNA. Its function is as follows. Forms an intersubunit bridge (bridge B4) with the 23S rRNA of the 50S subunit in the ribosome. This Syntrophotalea carbinolica (strain DSM 2380 / NBRC 103641 / GraBd1) (Pelobacter carbinolicus) protein is Small ribosomal subunit protein uS15.